We begin with the raw amino-acid sequence, 473 residues long: MAAKVLLVEDDRALREALSDTLLLGGHEFVAVDSAEAALPVLAREAFSLVISDVNMPGMDGHQLLGLIRTRYPHLPVLLMTAYGAVDRAVEAMRQGAADYLVKPFEARALLDLVARHALGQLPGSEEDGPVALEPASRQLLELAARVARSDSTVLISGESGTGKEVLANYIHQQSPRAGKPFIAINCAAIPDNMLEATLFGHEKGSFTGAIAAQPGKFELADGGTILLDEISEMPLGLQAKLLRVLQEREVERVGARKPINLDIRVLATTNRDLAAEVAAGRFREDLYYRLSVFPLAWRPLRERPADILPLAERLLRKHSRKMNLGAVALGPEAAQCLVRHAWPGNVRELDNAIQRALILQQGGLIQPADLCLTAPIGMPLAAPVPVPMPAMPPATPPSVEIPSPAAGQDASGALGDDLRRREFQVIIDTLRTERGRRKEAAERLGISPRTLRYKLAQMRDAGMDVEAYLYAI.

The region spanning 4–118 is the Response regulatory domain; it reads KVLLVEDDRA…ALLDLVARHA (115 aa). The residue at position 53 (Asp53) is a 4-aspartylphosphate. Positions 130 to 359 constitute a Sigma-54 factor interaction domain; the sequence is PVALEPASRQ…LDNAIQRALI (230 aa). ATP-binding positions include 158-165 and 221-230; these read GESGTGKE and ADGGTILLDE.

In terms of biological role, member of the two-component regulatory system FleS/FleR that regulates the expression of multiple genes involved in flagellar synthesis, adhesion, swarming, motility and antibiotic resistance. May function as a transcriptional activator by direct binding to a cis-acting sequence upstream of the target genes. This chain is Response regulator protein FleR, found in Pseudomonas aeruginosa (strain ATCC 15692 / DSM 22644 / CIP 104116 / JCM 14847 / LMG 12228 / 1C / PRS 101 / PAO1).